A 409-amino-acid chain; its full sequence is Argininosuccinate synthase (409 aa).

Residues 15 to 23 and Ala42 contribute to the ATP site; that span reads AYSGGLDTS. L-citrulline contacts are provided by Tyr93 and Ser98. Residue Gly123 coordinates ATP. 3 residues coordinate L-aspartate: Thr125, Asn129, and Asp130. Asn129 provides a ligand contact to L-citrulline. Residues Arg133, Ser182, Ser191, Glu267, and Tyr279 each contribute to the L-citrulline site.

The protein belongs to the argininosuccinate synthase family. Type 1 subfamily. As to quaternary structure, homotetramer.

Its subcellular location is the cytoplasm. The catalysed reaction is L-citrulline + L-aspartate + ATP = 2-(N(omega)-L-arginino)succinate + AMP + diphosphate + H(+). It participates in amino-acid biosynthesis; L-arginine biosynthesis; L-arginine from L-ornithine and carbamoyl phosphate: step 2/3. The chain is Argininosuccinate synthase from Desulfitobacterium hafniense (strain Y51).